Reading from the N-terminus, the 301-residue chain is D-alanine--D-alanine ligase (301 aa).

In terms of domain architecture, ATP-grasp spans 101–296 (KLMWRAAGLA…YPTLVRRVLE (196 aa)). 127-182 (EEELGLPLFVKPAREGSSIGVTKVKERGALKAAYEEAARHDPLVIAEKGVMGGEYT) is an ATP binding site. The Mg(2+) site is built by aspartate 250, glutamate 263, and asparagine 265.

It belongs to the D-alanine--D-alanine ligase family. Mg(2+) serves as cofactor. Mn(2+) is required as a cofactor.

The protein localises to the cytoplasm. The enzyme catalyses 2 D-alanine + ATP = D-alanyl-D-alanine + ADP + phosphate + H(+). It functions in the pathway cell wall biogenesis; peptidoglycan biosynthesis. Cell wall formation. The chain is D-alanine--D-alanine ligase from Dechloromonas aromatica (strain RCB).